The following is a 168-amino-acid chain: Small ribosomal subunit protein uS5 (168 aa).

In terms of domain architecture, S5 DRBM spans 17-80 (IEDQLVAVNR…EDGKKKMINV (64 aa)).

It belongs to the universal ribosomal protein uS5 family. Part of the 30S ribosomal subunit. Contacts proteins S4 and S8.

Functionally, with S4 and S12 plays an important role in translational accuracy. In terms of biological role, located at the back of the 30S subunit body where it stabilizes the conformation of the head with respect to the body. The chain is Small ribosomal subunit protein uS5 from Lactobacillus acidophilus (strain ATCC 700396 / NCK56 / N2 / NCFM).